The following is a 561-amino-acid chain: Asparagine synthetase [glutamine-hydrolyzing] (561 aa).

Residue cysteine 2 is the For GATase activity of the active site. Positions 2-191 (CGIWALFGSD…PGHYEVLDLK (190 aa)) constitute a Glutamine amidotransferase type-2 domain. Residues 49-53 (RLAVV), 75-77 (NGE), and aspartate 97 contribute to the L-glutamine site. Residues 213-536 (HALYDNVEKL…PGRADWLSHY (324 aa)) enclose the Asparagine synthetase domain. ATP is bound by residues leucine 256, isoleucine 288, and 363 to 364 (SG). Lysine 385 bears the N6-acetyllysine mark. Threonine 545 carries the post-translational modification Phosphothreonine. At serine 557 the chain carries Phosphoserine.

It catalyses the reaction L-aspartate + L-glutamine + ATP + H2O = L-asparagine + L-glutamate + AMP + diphosphate + H(+). It functions in the pathway amino-acid biosynthesis; L-asparagine biosynthesis; L-asparagine from L-aspartate (L-Gln route): step 1/1. This chain is Asparagine synthetase [glutamine-hydrolyzing] (ASNS), found in Pongo abelii (Sumatran orangutan).